A 64-amino-acid chain; its full sequence is DNA gyrase inhibitor YacG (64 aa).

4 residues coordinate Zn(2+): Cys-10, Cys-13, Cys-29, and Cys-33.

Belongs to the DNA gyrase inhibitor YacG family. In terms of assembly, interacts with GyrB. The cofactor is Zn(2+).

In terms of biological role, inhibits all the catalytic activities of DNA gyrase by preventing its interaction with DNA. Acts by binding directly to the C-terminal domain of GyrB, which probably disrupts DNA binding by the gyrase. The sequence is that of DNA gyrase inhibitor YacG from Pectobacterium atrosepticum (strain SCRI 1043 / ATCC BAA-672) (Erwinia carotovora subsp. atroseptica).